The primary structure comprises 625 residues: DNA mismatch repair protein MutL (625 aa).

This sequence belongs to the DNA mismatch repair MutL/HexB family.

Its function is as follows. This protein is involved in the repair of mismatches in DNA. It is required for dam-dependent methyl-directed DNA mismatch repair. May act as a 'molecular matchmaker', a protein that promotes the formation of a stable complex between two or more DNA-binding proteins in an ATP-dependent manner without itself being part of a final effector complex. The polypeptide is DNA mismatch repair protein MutL (Xanthomonas axonopodis pv. citri (strain 306)).